A 130-amino-acid chain; its full sequence is MNAKIKAKTRSQMIDELSKMLNIEKKQTKAFMDTYEAFLILELSRAKEVRLGNIGKFKVSVRAERKGINPKTGETVIIPEKTIPKFTFTKGIKEIINAGISIDNERVSIDDNDFDDDDEFVEEYIVSENN.

Belongs to the bacterial histone-like protein family.

Functionally, histone-like DNA-binding protein which is capable of wrapping DNA to stabilize it, and thus to prevent its denaturation under extreme environmental conditions. The sequence is that of DNA-binding protein HU (hup) from Ureaplasma parvum serovar 3 (strain ATCC 700970).